Here is a 131-residue protein sequence, read N- to C-terminus: Large ribosomal subunit protein bL17 (131 aa).

Belongs to the bacterial ribosomal protein bL17 family. Part of the 50S ribosomal subunit. Contacts protein L32.

This chain is Large ribosomal subunit protein bL17, found in Sodalis glossinidius (strain morsitans).